The primary structure comprises 921 residues: Bifunctional aspartokinase/homoserine dehydrogenase, chloroplastic (921 aa).

The transit peptide at 1 to 87 (SLSSAISPSS…DDSVEKVHLP (87 aa)) directs the protein to the chloroplast. The aspartokinase stretch occupies residues 88–339 (RGAMWSIHKF…VSEAVVLKTL (252 aa)). The interval 340–567 (SYQEAWEMSY…LSRTTIAVGI (228 aa)) is interface. 2 consecutive ACT domains span residues 417–489 (VEGT…QVAN) and 498–575 (TVGQ…LIGA). Positions 568 to 921 (VGPGLIGATL…RLASYLGAPS (354 aa)) are homoserine dehydrogenase. Position 573 (isoleucine 573) interacts with NAD(+). Isoleucine 573, arginine 605, threonine 654, and lysine 678 together coordinate NADP(+). Position 573 (isoleucine 573) interacts with NADPH. Threonine 654 is an NAD(+) binding site. 2 residues coordinate NADPH: threonine 654 and lysine 678. 4 residues coordinate Na(+): glutamate 705, valine 708, alanine 710, and leucine 712. Glycine 763 and glutamate 766 together coordinate NADP(+). 2 residues coordinate L-homoserine: glutamate 766 and aspartate 777. Catalysis depends on lysine 781, which acts as the Proton donor. An NAD(+)-binding site is contributed by glycine 898. Position 898 (glycine 898) interacts with NADP(+). An NADPH-binding site is contributed by glycine 898.

It in the N-terminal section; belongs to the aspartokinase family. In the C-terminal section; belongs to the homoserine dehydrogenase family. Requires a metal cation as cofactor.

The protein localises to the plastid. Its subcellular location is the chloroplast. The catalysed reaction is L-homoserine + NADP(+) = L-aspartate 4-semialdehyde + NADPH + H(+). The enzyme catalyses L-homoserine + NAD(+) = L-aspartate 4-semialdehyde + NADH + H(+). It catalyses the reaction L-aspartate + ATP = 4-phospho-L-aspartate + ADP. It functions in the pathway amino-acid biosynthesis; L-lysine biosynthesis via DAP pathway; (S)-tetrahydrodipicolinate from L-aspartate: step 1/4. The protein operates within amino-acid biosynthesis; L-methionine biosynthesis via de novo pathway; L-homoserine from L-aspartate: step 1/3. Its pathway is amino-acid biosynthesis; L-methionine biosynthesis via de novo pathway; L-homoserine from L-aspartate: step 3/3. It participates in amino-acid biosynthesis; L-threonine biosynthesis; L-threonine from L-aspartate: step 1/5. It functions in the pathway amino-acid biosynthesis; L-threonine biosynthesis; L-threonine from L-aspartate: step 3/5. Bifunctional aspartate kinase and homoserine dehydrogenase that catalyzes the first and the third steps toward the synthesis of lysine, methionine and threonine from aspartate. This chain is Bifunctional aspartokinase/homoserine dehydrogenase, chloroplastic, found in Daucus carota (Wild carrot).